The chain runs to 223 residues: Endonuclease NucS (223 aa).

Belongs to the NucS endonuclease family.

The protein localises to the cytoplasm. Functionally, cleaves both 3' and 5' ssDNA extremities of branched DNA structures. This is Endonuclease NucS from Mycobacterium sp. (strain JLS).